We begin with the raw amino-acid sequence, 81 residues long: 2,3-bisphosphoglycerate-independent phosphoglycerate mutase (81 aa).

Ser-14 (phosphoserine intermediate) is an active-site residue. Position 14 (Ser-14) interacts with Mn(2+). Substrate is bound at residue His-75.

Belongs to the BPG-independent phosphoglycerate mutase family. Monomer. Requires Mn(2+) as cofactor.

It carries out the reaction (2R)-2-phosphoglycerate = (2R)-3-phosphoglycerate. Its pathway is carbohydrate degradation; glycolysis; pyruvate from D-glyceraldehyde 3-phosphate: step 3/5. Functionally, catalyzes the interconversion of 2-phosphoglycerate and 3-phosphoglycerate. This chain is 2,3-bisphosphoglycerate-independent phosphoglycerate mutase (gpmI), found in Tomato big bud phytoplasma.